The following is a 155-amino-acid chain: Small ribosomal subunit protein uS7 (155 aa).

It belongs to the universal ribosomal protein uS7 family. In terms of assembly, part of the 30S ribosomal subunit. Contacts proteins S9 and S11.

Functionally, one of the primary rRNA binding proteins, it binds directly to 16S rRNA where it nucleates assembly of the head domain of the 30S subunit. Is located at the subunit interface close to the decoding center, probably blocks exit of the E-site tRNA. The chain is Small ribosomal subunit protein uS7 from Petrotoga mobilis (strain DSM 10674 / SJ95).